We begin with the raw amino-acid sequence, 287 residues long: UPF0276 protein ACIAD0933 (287 aa).

Belongs to the UPF0276 family.

The sequence is that of UPF0276 protein ACIAD0933 from Acinetobacter baylyi (strain ATCC 33305 / BD413 / ADP1).